The sequence spans 586 residues: MCGILAVLGCSDDSQAKRVRVLELSRRLRHRGPDWSGIYQNGFNYLAHQRLAIIDPDSGDQPLFNEDKSIVVTVNGEIYNHEELRKGLKNHKFHTGSDCDVIAHLYEEHGENFVDMLDGIFSFVLLDTRDNSFMVARDAVGVTSLYIGWGLDGSLWVSSEMKGLHEDCEHFEAFPPGHLYSSKSGGGFKQWYNPPWFNESVPSTPYEPLAIRSAFEDAVIKRLMTDVPFGVLLSGGLDSSLVASITARHLAGTKAAKRWGPQLHSFCVGLEGSPDLKAGKEVAEYLGTVHHEFHFTVQDGIDAIEDVIYHVETYDVTTIRASTPMFLMSRKIKSLGVKMVLSGEGSDEIFGGYLYFHKAPNKQEFHQETCRKIKALHKYDCLRANKATSAFGLEARVPFLDKEFINTAMSLDPESKMIKPEEGRIEKWVLRRAFDDEERPYLPKHILYRQKEQFSDGVGYSWIDGLKAHAAENVNDKMMSKAAFIFPHNTPLTKEAYYYRMIFERFFPQNSARLTVPGGATVACSTAKAVEWDASWSNNMDPSGRAAIGVHLSAYDGSKVALPLPAPHKAIDDIPMMMGQEVVIQT.

The For GATase activity role is filled by C2. Residues 2 to 185 form the Glutamine amidotransferase type-2 domain; it reads CGILAVLGCS…PGHLYSSKSG (184 aa). L-glutamine is bound by residues 50 to 54, 75 to 77, and D98; these read RLAII and NGE. The region spanning 194–517 is the Asparagine synthetase domain; it reads PPWFNESVPS…PQNSARLTVP (324 aa). Residues L232, V268, and 342–343 contribute to the ATP site; that span reads SG.

Belongs to the asparagine synthetase family.

The enzyme catalyses L-aspartate + L-glutamine + ATP + H2O = L-asparagine + L-glutamate + AMP + diphosphate + H(+). It participates in amino-acid biosynthesis; L-asparagine biosynthesis; L-asparagine from L-aspartate (L-Gln route): step 1/1. This Brassica oleracea (Wild cabbage) protein is Asparagine synthetase [glutamine-hydrolyzing].